We begin with the raw amino-acid sequence, 274 residues long: Glutamate--cysteine ligase regulatory subunit (274 aa).

Position 59 is a phosphoserine (Ser-59). The residue at position 263 (Lys-263) is an N6-acetyllysine.

Belongs to the aldo/keto reductase family. Glutamate--cysteine ligase light chain subfamily. As to quaternary structure, heterodimer of a catalytic heavy chain and a regulatory light chain. As to expression, most abundant in kidney. Also found in liver and testis.

It participates in sulfur metabolism; glutathione biosynthesis; glutathione from L-cysteine and L-glutamate: step 1/2. The sequence is that of Glutamate--cysteine ligase regulatory subunit (Gclm) from Rattus norvegicus (Rat).